The chain runs to 217 residues: Protein-L-isoaspartate O-methyltransferase (217 aa).

Serine 67 is a catalytic residue.

Belongs to the methyltransferase superfamily. L-isoaspartyl/D-aspartyl protein methyltransferase family.

Its subcellular location is the cytoplasm. The enzyme catalyses [protein]-L-isoaspartate + S-adenosyl-L-methionine = [protein]-L-isoaspartate alpha-methyl ester + S-adenosyl-L-homocysteine. Its function is as follows. Catalyzes the methyl esterification of L-isoaspartyl residues in peptides and proteins that result from spontaneous decomposition of normal L-aspartyl and L-asparaginyl residues. It plays a role in the repair and/or degradation of damaged proteins. The chain is Protein-L-isoaspartate O-methyltransferase from Azoarcus sp. (strain BH72).